We begin with the raw amino-acid sequence, 162 residues long: NADH-quinone oxidoreductase subunit I 1 (162 aa).

2 consecutive 4Fe-4S ferredoxin-type domains span residues 52–82 (LRRY…IEAG) and 93–122 (VRYD…EGPN). The [4Fe-4S] cluster site is built by cysteine 62, cysteine 65, cysteine 68, cysteine 72, cysteine 102, cysteine 105, cysteine 108, and cysteine 112.

It belongs to the complex I 23 kDa subunit family. In terms of assembly, NDH-1 is composed of 14 different subunits. Subunits NuoA, H, J, K, L, M, N constitute the membrane sector of the complex. It depends on [4Fe-4S] cluster as a cofactor.

Its subcellular location is the cell inner membrane. It carries out the reaction a quinone + NADH + 5 H(+)(in) = a quinol + NAD(+) + 4 H(+)(out). Functionally, NDH-1 shuttles electrons from NADH, via FMN and iron-sulfur (Fe-S) centers, to quinones in the respiratory chain. The immediate electron acceptor for the enzyme in this species is believed to be ubiquinone. Couples the redox reaction to proton translocation (for every two electrons transferred, four hydrogen ions are translocated across the cytoplasmic membrane), and thus conserves the redox energy in a proton gradient. This Rhodopseudomonas palustris (strain ATCC BAA-98 / CGA009) protein is NADH-quinone oxidoreductase subunit I 1.